The sequence spans 218 residues: Protein-lysine N-methyltransferase M142.8 (218 aa).

Belongs to the class I-like SAM-binding methyltransferase superfamily. EFM5 family.

It is found in the cytoplasm. Functionally, S-adenosyl-L-methionine-dependent protein-lysine N-methyltransferase that methylates elongation factor 1-alpha. This Caenorhabditis elegans protein is Protein-lysine N-methyltransferase M142.8.